The primary structure comprises 192 residues: UPF0312 protein YPK_1931 (192 aa).

A signal peptide spans 1–23 (MINKTLLGLSLGALMFTAGSAVA).

The protein belongs to the UPF0312 family. Type 1 subfamily.

The protein localises to the periplasm. The polypeptide is UPF0312 protein YPK_1931 (Yersinia pseudotuberculosis serotype O:3 (strain YPIII)).